The sequence spans 358 residues: WD repeat domain phosphoinositide-interacting protein 4 (358 aa).

2 WD repeats span residues 2–40 (AQQR…EKGH) and 188–228 (AHQS…KLVE). Residues 229 to 232 (LRRG) carry the L/FRRG motif motif. One copy of the WD 3 repeat lies at 233–272 (TDPATLYCINFSHDSSFLCASSDKGTVHIFALKDTKLNRR).

It belongs to the WD repeat PROPPIN family.

Its subcellular location is the preautophagosomal structure. In terms of biological role, component of the autophagy machinery that controls the major intracellular degradation process by which cytoplasmic materials are packaged into autophagosomes and delivered to lysosomes for degradation. Binds phosphatidylinositol 3-phosphate (PtdIns3P). This is WD repeat domain phosphoinositide-interacting protein 4 (wdr45) from Danio rerio (Zebrafish).